The following is a 164-amino-acid chain: Large ribosomal subunit protein eL24 (164 aa).

Disordered stretches follow at residues 63 to 82 and 117 to 164; these read KDAA…KPYS and ERIK…GGKA. Basic residues predominate over residues 71–81; the sequence is KKRRRATKKPY. Over residues 117–133 the composition is skewed to basic and acidic residues; the sequence is ERIKKTKDEKKAKKAEV.

This sequence belongs to the eukaryotic ribosomal protein eL24 family.

It is found in the cytoplasm. In Cicer arietinum (Chickpea), this protein is Large ribosomal subunit protein eL24 (RPL24).